We begin with the raw amino-acid sequence, 122 residues long: Large ribosomal subunit protein uL14 (122 aa).

It belongs to the universal ribosomal protein uL14 family. Part of the 50S ribosomal subunit. Forms a cluster with proteins L3 and L19. In the 70S ribosome, L14 and L19 interact and together make contacts with the 16S rRNA in bridges B5 and B8.

Binds to 23S rRNA. Forms part of two intersubunit bridges in the 70S ribosome. This is Large ribosomal subunit protein uL14 from Mycobacterium ulcerans (strain Agy99).